We begin with the raw amino-acid sequence, 317 residues long: Beta-ketoacyl-[acyl-carrier-protein] synthase III (317 aa).

Residues Cys112 and His244 contribute to the active site. An ACP-binding region spans residues 245–249; it reads QANLR. Residue Asn274 is part of the active site.

This sequence belongs to the thiolase-like superfamily. FabH family. Homodimer.

It localises to the cytoplasm. The catalysed reaction is malonyl-[ACP] + acetyl-CoA + H(+) = 3-oxobutanoyl-[ACP] + CO2 + CoA. It participates in lipid metabolism; fatty acid biosynthesis. Its function is as follows. Catalyzes the condensation reaction of fatty acid synthesis by the addition to an acyl acceptor of two carbons from malonyl-ACP. Catalyzes the first condensation reaction which initiates fatty acid synthesis and may therefore play a role in governing the total rate of fatty acid production. Possesses both acetoacetyl-ACP synthase and acetyl transacylase activities. Its substrate specificity determines the biosynthesis of branched-chain and/or straight-chain of fatty acids. The protein is Beta-ketoacyl-[acyl-carrier-protein] synthase III of Shigella dysenteriae serotype 1 (strain Sd197).